The sequence spans 400 residues: WW domain-containing transcription regulator protein 1 (400 aa).

Residue K46 forms a Glycyl lysine isopeptide (Lys-Gly) (interchain with G-Cter in ubiquitin) linkage. The disordered stretch occupies residues 52–117 (FFKEPDSGSH…QQHAHLRQQS (66 aa)). The span at 61 to 70 (HSRQSSTDSS) shows a compositional bias: polar residues. S62 carries the post-translational modification Phosphoserine. A Phosphoserine; by LATS2 modification is found at S89. Position 105 is a phosphoserine (S105). A WW domain is found at 124–157 (LPLPPGWEMTFTATGQRYFLNHIEKITTWQDPRK). The required for interaction with PALS1 stretch occupies residues 222–400 (PNALTTQQQQ…NKSEPFLTWL (179 aa)). Residues 225–259 (LTTQQQQQQKLRLQRIQMERERIRMRQEELMRQEA) are a coiled coil. S295 is modified (phosphoserine). S311 bears the Phosphoserine; by LATS2 mark. Residues 394-400 (EPFLTWL) carry the PDZ-binding motif.

Binds to SLC9A3R2 via the PDZ motif at the plasma membrane. Binds to YWHAZ in vivo and in vitro through the phosphoserine-binding motif RSHSSP. Interacts (via coiled-coil domain) with SMAD2 (via MH1 domain), SMAD3 and SMAD4. Interacts with MED15. Interacts with PAX8 and NKX2-1. Interacts with TEAD1, TEAD2, TEAD3 and TEAD4. Interacts (via WW domain) with PALS1. Interacts with LATS1. Interacts with YAP1 (when phosphorylated at 'Ser-127'). Interacts (via WW domain) with PRRG4 (via cytoplasmic domain). Interacts (via WW domain) with AMOTL2 (via PPXY motif); the interaction promotes WWTR1/TAZ localization to the cytoplasm and tight junctions, thereby inhibiting its transcriptional coactivator properties. Interacts (via WW domain) with AMOT isoform 1; the interaction facilitates translocation of WWTR1/TAZ to the cytoplasm. Phosphorylated by LATS2 and STK3/MST2. Phosphorylation by LATS2 results in creation of 14-3-3 binding sites, retention in the cytoplasm, and functional inactivation. Phosphorylation results in the inhibition of transcriptional coactivation through YWHAZ-mediated nuclear export. Phosphorylated in the nucleus by PRP4K; phosphorylation leads to nuclear exclusion. In terms of processing, ubiquitinated at Lys-46; leading to proteasomal degradation. Deubiquitinated and stabilized by UCHL1 at Lys-46; leading to inhibition of osteoclastogenesis. Highly expressed in kidney, heart, placenta and lung. Expressed in the thyroid tissue.

The protein resides in the nucleus. The protein localises to the cytoplasm. It is found in the cell membrane. It localises to the cell junction. Its subcellular location is the tight junction. Its function is as follows. Transcriptional coactivator which acts as a downstream regulatory target in the Hippo signaling pathway that plays a pivotal role in organ size control and tumor suppression by restricting proliferation and promoting apoptosis. The core of this pathway is composed of a kinase cascade wherein STK3/MST2 and STK4/MST1, in complex with its regulatory protein SAV1, phosphorylates and activates LATS1/2 in complex with its regulatory protein MOB1, which in turn phosphorylates and inactivates YAP1 oncoprotein and WWTR1/TAZ. WWTR1 enhances PAX8 and NKX2-1/TTF1-dependent gene activation. In conjunction with YAP1, involved in the regulation of TGFB1-dependent SMAD2 and SMAD3 nuclear accumulation. Plays a key role in coupling SMADs to the transcriptional machinery such as the mediator complex. Regulates embryonic stem-cell self-renewal, promotes cell proliferation and epithelial-mesenchymal transition. In Homo sapiens (Human), this protein is WW domain-containing transcription regulator protein 1.